The following is a 181-amino-acid chain: Ribosome maturation factor RimM (181 aa).

A PRC barrel domain is found at 98-177; the sequence is EGEFFYCDLI…KITTHNAKTL (80 aa).

It belongs to the RimM family. Binds ribosomal protein uS19.

It is found in the cytoplasm. An accessory protein needed during the final step in the assembly of 30S ribosomal subunit, possibly for assembly of the head region. Essential for efficient processing of 16S rRNA. May be needed both before and after RbfA during the maturation of 16S rRNA. It has affinity for free ribosomal 30S subunits but not for 70S ribosomes. This is Ribosome maturation factor RimM from Helicobacter pylori (strain J99 / ATCC 700824) (Campylobacter pylori J99).